Consider the following 294-residue polypeptide: tRNA dimethylallyltransferase (294 aa).

An ATP-binding site is contributed by 9 to 16 (GPTASGKS). Substrate is bound at residue 11-16 (TASGKS). The interval 155-159 (QRVIR) is interaction with substrate tRNA.

It belongs to the IPP transferase family. Monomer. It depends on Mg(2+) as a cofactor.

The catalysed reaction is adenosine(37) in tRNA + dimethylallyl diphosphate = N(6)-dimethylallyladenosine(37) in tRNA + diphosphate. Functionally, catalyzes the transfer of a dimethylallyl group onto the adenine at position 37 in tRNAs that read codons beginning with uridine, leading to the formation of N6-(dimethylallyl)adenosine (i(6)A). The protein is tRNA dimethylallyltransferase of Leuconostoc citreum (strain KM20).